The following is a 375-amino-acid chain: Peptide-N(4)-(N-acetyl-beta-glucosaminyl)asparagine amidase (375 aa).

Residues cysteine 129, cysteine 132, cysteine 163, and cysteine 166 each contribute to the Zn(2+) site. Catalysis depends on cysteine 189, which acts as the Nucleophile. Active-site residues include histidine 219 and aspartate 236. Residue glutamate 239 coordinates substrate. Residues 345–375 (KIEVSRTHNIPTGRQTGDAEWTKSRGEDGNE) form a disordered region. Residues 364–375 (EWTKSRGEDGNE) show a composition bias toward basic and acidic residues.

The protein belongs to the transglutaminase-like superfamily. PNGase family. The cofactor is Zn(2+).

It is found in the cytoplasm. It carries out the reaction Hydrolysis of an N(4)-(acetyl-beta-D-glucosaminyl)asparagine residue in which the glucosamine residue may be further glycosylated, to yield a (substituted) N-acetyl-beta-D-glucosaminylamine and a peptide containing an aspartate residue.. Functionally, specifically deglycosylates the denatured form of N-linked glycoproteins in the cytoplasm and assists their proteasome-mediated degradation. Cleaves the beta-aspartyl-glucosamine (GlcNAc) of the glycan and the amide side chain of Asn, converting Asn to Asp. Prefers proteins containing high-mannose over those bearing complex type oligosaccharides. Can recognize misfolded proteins in the endoplasmic reticulum that are exported to the cytosol to be destroyed and deglycosylate them, while it has no activity toward native proteins. Deglycosylation is a prerequisite for subsequent proteasome-mediated degradation of some, but not all, misfolded glycoproteins. This chain is Peptide-N(4)-(N-acetyl-beta-glucosaminyl)asparagine amidase (PNG1), found in Debaryomyces hansenii (strain ATCC 36239 / CBS 767 / BCRC 21394 / JCM 1990 / NBRC 0083 / IGC 2968) (Yeast).